Here is a 129-residue protein sequence, read N- to C-terminus: MAREPGRVRRRERKNITSGVAHVNASFNNTMITITDAQGNAISWSSAGMMGFKGSRKSTPYAAQVAADDAGRKAAEHGVRTLEVEVKGPGSGRESALRALQAVGFTITSIRDVTPIPHNGVRPSKRRRV.

This sequence belongs to the universal ribosomal protein uS11 family. As to quaternary structure, part of the 30S ribosomal subunit. Interacts with proteins S7 and S18. Binds to IF-3.

Located on the platform of the 30S subunit, it bridges several disparate RNA helices of the 16S rRNA. Forms part of the Shine-Dalgarno cleft in the 70S ribosome. This Erythrobacter litoralis (strain HTCC2594) protein is Small ribosomal subunit protein uS11.